A 1381-amino-acid chain; its full sequence is Hepatocyte growth factor receptor (1381 aa).

Residues 1-24 (MKALAVLGPGLLVHLLTLVQKSGG) form the signal peptide. The Extracellular segment spans residues 25-932 (ECKEALVKSA…VIVQPDQNFT (908 aa)). Residues 27-515 (KEALVKSAMN…TGKTITKIPL (489 aa)) form the Sema domain. N-linked (GlcNAc...) asparagine glycosylation is found at N45 and N74. 6 cysteine pairs are disulfide-bonded: C95/C101, C98/C159, C133/C141, C172/C175, C298/C363, and C385/C397. N-linked (GlcNAc...) asparagine glycosylation occurs at N106. An N-linked (GlcNAc...) asparagine glycan is attached at N358. A glycan (N-linked (GlcNAc...) asparagine) is linked at N399. Intrachain disulfides connect C520–C538, C526–C561, C529–C545, and C541–C551. 3 consecutive IPT/TIG domains span residues 563–655 (PTIY…FSYV), 657–739 (PIIT…FNYR), and 742–836 (PIVD…LIYV). T582 carries O-linked (Man) threonine glycosylation. Residues N607 and N635 are each glycosylated (N-linked (GlcNAc...) asparagine). T676 and T761 each carry an O-linked (Man) threonine glycan. N785, N879, and N930 each carry an N-linked (GlcNAc...) asparagine glycan. The chain crosses the membrane as a helical span at residues 933-955 (GLIVGVISISVLLSLLFGLFLWL). Residues 956-1381 (KRRKQIKDLG…QDHVDGEGDT (426 aa)) lie on the Cytoplasmic side of the membrane. A Phosphoserine modification is found at S966. At T977 the chain carries Phosphothreonine. A phosphoserine mark is found at S990, S997, and S1000. Y1003 is subject to Phosphotyrosine. Positions 1078–1345 (VHFNEVIGRG…RISAIFSAFI (268 aa)) constitute a Protein kinase domain. Residues 1084 to 1092 (IGRGHFGCV) and K1110 each bind ATP. D1204 (proton acceptor) is an active-site residue. The tract at residues 1212–1381 (LDENFTVKVA…QDHVDGEGDT (170 aa)) is interaction with RANBP9. Y1230 is subject to Phosphotyrosine. 2 positions are modified to phosphotyrosine; by autocatalysis: Y1234 and Y1235. A Phosphothreonine modification is found at T1289. An interaction with MUC20 region spans residues 1320 to 1359 (WHPKAEQRPSFAELVSRISAIFSAFIGEHYVHVNATYVNV). A phosphotyrosine; by autocatalysis mark is found at Y1349 and Y1356. Position 1365 is a phosphotyrosine (Y1365).

It belongs to the protein kinase superfamily. Tyr protein kinase family. As to quaternary structure, heterodimer made of an alpha chain (50 kDa) and a beta chain (145 kDa) which are disulfide linked. Binds PLXNB1. Interacts when phosphorylated with downstream effectors including STAT3, PIK3R1, SRC, PCLG1, GRB2 and GAB1. Interacts with SPSB1, SPSB2 and SPSB4. Interacts with INPP5D/SHIP1. When phosphorylated at Tyr-1356, interacts with INPPL1/SHIP2. Interacts with RANBP9 and RANBP10, as well as SPSB1, SPSB2, SPSB3 and SPSB4. SPSB1 binding occurs in the presence and in the absence of HGF, however HGF treatment has a positive effect on this interaction. Interacts with MUC20; prevents interaction with GRB2 and suppresses hepatocyte growth factor-induced cell proliferation. Interacts with GRB10. Interacts with PTPN1 and PTPN2. Interacts with HSP90AA1 and HSP90AB1; the interaction suppresses MET kinase activity. Interacts with tensin TNS3. Interacts (when phosphorylated) with tensin TNS4 (via SH2 domain); the interaction increases MET protein stability by inhibiting MET endocytosis and subsequent lysosomal degradation. In terms of processing, autophosphorylated in response to ligand binding on Tyr-1234 and Tyr-1235 in the kinase domain leading to further phosphorylation of Tyr-1349 and Tyr-1356 in the C-terminal multifunctional docking site. Dephosphorylated by PTPRJ at Tyr-1349 and Tyr-1365. Dephosphorylated by PTPN1 and PTPN2. Ubiquitinated. Ubiquitination by CBL regulates the receptor stability and activity through proteasomal degradation. Post-translationally, O-mannosylation of IPT/TIG domains by TMEM260 is required for protein maturation. O-mannosylated residues are composed of single mannose glycans that are not elongated or modified.

The protein localises to the membrane. It catalyses the reaction L-tyrosyl-[protein] + ATP = O-phospho-L-tyrosyl-[protein] + ADP + H(+). With respect to regulation, in its inactive state, the C-terminal tail interacts with the catalytic domain and inhibits the kinase activity. Upon ligand binding, the C-terminal tail is displaced and becomes phosphorylated, thus increasing the kinase activity. Its function is as follows. Receptor tyrosine kinase that transduces signals from the extracellular matrix into the cytoplasm by binding to hepatocyte growth factor/HGF ligand. Regulates many physiological processes including proliferation, scattering, morphogenesis and survival. Ligand binding at the cell surface induces autophosphorylation of MET on its intracellular domain that provides docking sites for downstream signaling molecules. Following activation by ligand, interacts with the PI3-kinase subunit PIK3R1, PLCG1, SRC, GRB2, STAT3 or the adapter GAB1. Recruitment of these downstream effectors by MET leads to the activation of several signaling cascades including the RAS-ERK, PI3 kinase-AKT, or PLCgamma-PKC. The RAS-ERK activation is associated with the morphogenetic effects while PI3K/AKT coordinates prosurvival effects. During embryonic development, MET signaling plays a role in gastrulation, development and migration of muscles and neuronal precursors, angiogenesis and kidney formation. In adults, participates in wound healing as well as organ regeneration and tissue remodeling. Also promotes differentiation and proliferation of hematopoietic cells. The sequence is that of Hepatocyte growth factor receptor (MET) from Rhinolophus ferrumequinum (Greater horseshoe bat).